Reading from the N-terminus, the 734-residue chain is Photosystem I P700 chlorophyll a apoprotein A2 (734 aa).

Transmembrane regions (helical) follow at residues Ile46–Ala69, Leu135–Gln158, Leu175–Ile199, Met273–Tyr291, Leu330–Tyr353, Ala369–Ile395, Ala417–His439, and Phe517–Val535. [4Fe-4S] cluster is bound by residues Cys559 and Cys568. The next 2 membrane-spanning stretches (helical) occupy residues Ala575–Trp596 and Leu643–Ile665. Chlorophyll a contacts are provided by His654, Met662, and Tyr670. Trp671 contributes to the phylloquinone binding site. The helical transmembrane segment at Leu707–Ala727 threads the bilayer.

Belongs to the PsaA/PsaB family. The PsaA/B heterodimer binds the P700 chlorophyll special pair and subsequent electron acceptors. PSI consists of a core antenna complex that captures photons, and an electron transfer chain that converts photonic excitation into a charge separation. The eukaryotic PSI reaction center is composed of at least 11 subunits. The cofactor is P700 is a chlorophyll a/chlorophyll a' dimer, A0 is one or more chlorophyll a, A1 is one or both phylloquinones and FX is a shared 4Fe-4S iron-sulfur center..

The protein localises to the plastid. The protein resides in the chloroplast thylakoid membrane. It catalyses the reaction reduced [plastocyanin] + hnu + oxidized [2Fe-2S]-[ferredoxin] = oxidized [plastocyanin] + reduced [2Fe-2S]-[ferredoxin]. Functionally, psaA and PsaB bind P700, the primary electron donor of photosystem I (PSI), as well as the electron acceptors A0, A1 and FX. PSI is a plastocyanin-ferredoxin oxidoreductase, converting photonic excitation into a charge separation, which transfers an electron from the donor P700 chlorophyll pair to the spectroscopically characterized acceptors A0, A1, FX, FA and FB in turn. Oxidized P700 is reduced on the lumenal side of the thylakoid membrane by plastocyanin. The protein is Photosystem I P700 chlorophyll a apoprotein A2 of Solanum tuberosum (Potato).